We begin with the raw amino-acid sequence, 415 residues long: Beta-1,4-glucuronyltransferase 1 (415 aa).

Residues 1-8 are Cytoplasmic-facing; sequence MQMSYAIR. Residues 9–36 form a helical; Signal-anchor for type II membrane protein membrane-spanning segment; the sequence is CAFYQLLLAALMLVAMLQLLYLSLLSGL. The Lumenal portion of the chain corresponds to 37 to 415; the sequence is HGQEEQDQYF…AKYPNSPRRC (379 aa). An N-linked (GlcNAc...) asparagine glycan is attached at N204. Mn(2+) contacts are provided by D227 and D229. An N-linked (GlcNAc...) asparagine glycan is attached at N300.

This sequence belongs to the glycosyltransferase 49 family. Interacts with LARGE1 and LARGE2. Mn(2+) is required as a cofactor. In terms of tissue distribution, in the adult, highly expressed in heart, brain, skeletal muscle and kidney and to a lesser extent in placenta, pancreas, spleen, prostate, testis, ovary, small intestine and colon. Very weak expression in lung, liver, thymus and peripheral blood leukocytes. In fetal highly expressed in brain and kidney and to a lesser extent in lung and liver.

It localises to the golgi apparatus membrane. The catalysed reaction is 3-O-[beta-D-Xyl-(1-&gt;4)-Rib-ol-P-Rib-ol-P-3-beta-D-GalNAc-(1-&gt;3)-beta-D-GlcNAc-(1-&gt;4)-(O-6-P-alpha-D-Man)]-Thr-[protein] + UDP-alpha-D-glucuronate = 3-O-[beta-D-GlcA-(1-&gt;3)-beta-D-Xyl-(1-&gt;4)-Rib-ol-P-Rib-ol-P-3-beta-D-GalNAc-(1-&gt;3)-beta-D-GlcNAc-(1-&gt;4)-(O-6-P-alpha-D-Man)]-Thr-[protein] + UDP + H(+). It functions in the pathway protein modification; protein glycosylation. Beta-1,4-glucuronyltransferase involved in O-mannosylation of alpha-dystroglycan (DAG1). Transfers a glucuronic acid (GlcA) residue onto a xylose (Xyl) acceptor to produce the glucuronyl-beta-1,4-xylose-beta disaccharide primer, which is further elongated by LARGE1, during synthesis of phosphorylated O-mannosyl glycan. Phosphorylated O-mannosyl glycan is a carbohydrate structure present in alpha-dystroglycan (DAG1), which is required for binding laminin G-like domain-containing extracellular proteins with high affinity. Required for axon guidance; via its function in O-mannosylation of alpha-dystroglycan (DAG1). In Homo sapiens (Human), this protein is Beta-1,4-glucuronyltransferase 1.